A 470-amino-acid chain; its full sequence is Cysteine--tRNA ligase (470 aa).

C29 provides a ligand contact to Zn(2+). The short motif at 31-41 (PTVYNYAHIGN) is the 'HIGH' region element. Zn(2+)-binding residues include C211, H236, and E240. Residues 273 to 277 (KMSKS) carry the 'KMSKS' region motif. K276 serves as a coordination point for ATP.

It belongs to the class-I aminoacyl-tRNA synthetase family. As to quaternary structure, monomer. Zn(2+) is required as a cofactor.

The protein localises to the cytoplasm. It catalyses the reaction tRNA(Cys) + L-cysteine + ATP = L-cysteinyl-tRNA(Cys) + AMP + diphosphate. This chain is Cysteine--tRNA ligase, found in Phenylobacterium zucineum (strain HLK1).